Here is a 712-residue protein sequence, read N- to C-terminus: TIR domain-containing adapter molecule 1 (712 aa).

The tract at residues 1–153 is TRIF-NTD; it reads MACTGPSLPS…CGWDIAGDPG (153 aa). The TRAF6-binding motif lies at 84-91; the sequence is EDPEEPPD. Positions 207 to 210 match the pLxIS motif motif; it reads LEIS. Phosphoserine; by TBK1 is present on S210. 2 disordered regions span residues 216–316 and 336–384; these read PFLS…SLPL and LSVE…LFPS. K229 is covalently cross-linked (Glycyl lysine isopeptide (Lys-Gly) (interchain with G-Cter in ubiquitin)). The short motif at 248-255 is the TRAF6-binding element; it reads QEPEEMSW. The span at 265–275 shows a compositional bias: pro residues; that stretch reads PELPSSPPPGL. The short motif at 299-309 is the TRAF6-binding element; sequence NYPVECTEGSA. A compositionally biased stretch (pro residues) spans 347-369; sequence KPCPPTPTTPETSPPPPPPPPSS. In terms of domain architecture, TIR spans 393 to 553; that stretch reads KFYNFVILHA…QDTRALREQS (161 aa). The sufficient to induce apoptosis stretch occupies residues 512–712; it reads RLDEHSQIFA…APEDKTQEAE (201 aa). Composition is skewed to pro residues over residues 620 to 633 and 640 to 649; these read PFPTWPGCPQPPPL and TPPPPSPQPA. Residues 620–677 are disordered; sequence PFPTWPGCPQPPPLHAWQAGTPPPPSPQPAAFPQSLPFPQSPAFPTASPAPPQSPGLQ. Residues 650–666 are compositionally biased toward low complexity; sequence AFPQSLPFPQSPAFPTA.

As to quaternary structure, homodimer. Found in a multi-helicase-TICAM1 complex at least composed of DHX36, DDX1, DDX21 and TICAM1; this complex exists in resting cells with or without poly(I:C) RNA ligand stimulation. Interacts (via TIR domain) with DDX21 (via C-terminus). Interacts (via TIR domain) with DHX36 (via C-terminus). Interacts with AZI2 and IRF7. Interacts with TICAM2 in TLR4 recruitment. Interaction with PIAS4 inhibits the TICAM1-induced NF-kappa-B, IRF and IFNB1 activation. Interacts with IKBKB and IKBKE. Interaction with SARM1 blocks TICAM1-dependent transcription factor activation. Interacts with TRAF3. Interacts (when phosphorylated) with IRF3; following activation and phosphorylation on the pLxIS motif by TBK1, recruits IRF3. Interacts with TBK1, TRAF6 and RIPK1 and these interactions are enhanced in the presence of WDFY1. Interacts with TRAFD1. Interacts with UBQLN1 (via UBA domain). Interacts with TLR4. Interacts with WDFY1 in response to poly(I:C). Interacts (via the TIR domain) with TLR3 in response to poly(I:C) and this interaction is enhanced in the presence of WDFY1. Interacts with TRIM56. Component of a multi-helicase-TICAM1 complex that acts as a cytoplasmic sensor of viral double-stranded RNA (dsRNA) and plays a role in the activation of a cascade of antiviral responses including the induction of pro-inflammatory cytokines. Interacts (via the TIR domain) with TLR5. Interacts with TRIM8. Interacts with TAX1BP1 and TRIM32; these interactions target TICAM1 to TAX1BP1-mediated selective autophagic degradation. Interacts with DDX50. In terms of assembly, (Microbial infection) Interacts with hepatitis C virus (HCV) NS3/4A protease; this interaction leads to TICAM1 cleavage, thereby disrupting TLR3 signaling and preventing the establishment of an antiviral state. (Microbial infection) Interacts with Seneca Valley virus protease 3C; this interaction allows the cleavage of TICAM1/TRIF and subsequent suppression of host innate immunity. As to quaternary structure, (Microbial infection) Interacts (via C-terminus) with coxsackievirus B3 (CVB3) protease 3C. In terms of processing, phosphorylated by TBK1. Following activation, phosphorylated by TBK1 at Ser-210 in the pLxIS motif. The phosphorylated pLxIS motif constitutes an IRF3-binding motif, leading to recruitment of the transcription factor IRF3 to induce type-I interferons and other cytokines. Polyubiquitinated at Lys-229 by TRIM38 with 'Lys-48'-linked chains, leading to proteasomal degradation. Polyubiquitinated with 'Lys-6'- and 'Lys-33'-linked chains in a TRIM8-dependent manner; ubiquitination disrupts the interaction with TBK1 and subsequent interferon production. Post-translationally, (Microbial infection) Cleaved and degraded by hepatitis A virus (HAV) protein 3CD allowing the virus to disrupt host TLR3 signaling. In terms of processing, (Microbial infection) Cleaved by CVB3 protease 3C allowing the virus to disrupt host TLR3 signaling. (Microbial infection) Cleaved by Seneca Valley virus protease 3C allowing the virus to disrupt host TLR3 signaling. Post-translationally, (Microbial infection) Cleaved by protease 3C of human enterovirus D68 (EV68) allowing the virus to disrupt host TLR3 signaling. In terms of processing, (Microbial infection) Cleaved by HCV protease NS3/4A, thereby disrupting TLR3 signaling and preventing the establishment of an antiviral state. In terms of tissue distribution, ubiquitously expressed but with higher levels in liver.

Its subcellular location is the cytoplasmic vesicle. The protein localises to the autophagosome. The protein resides in the cytoplasm. It is found in the cytosol. It localises to the mitochondrion. In terms of biological role, involved in innate immunity against invading pathogens. Adapter used by TLR3, TLR4 (through TICAM2) and TLR5 to mediate NF-kappa-B and interferon-regulatory factor (IRF) activation, and to induce apoptosis. Ligand binding to these receptors results in TRIF recruitment through its TIR domain. Distinct protein-interaction motifs allow recruitment of the effector proteins TBK1, TRAF6 and RIPK1, which in turn, lead to the activation of transcription factors IRF3 and IRF7, NF-kappa-B and FADD respectively. Phosphorylation by TBK1 on the pLxIS motif leads to recruitment and subsequent activation of the transcription factor IRF3 to induce expression of type I interferon and exert a potent immunity against invading pathogens. Component of a multi-helicase-TICAM1 complex that acts as a cytoplasmic sensor of viral double-stranded RNA (dsRNA) and plays a role in the activation of a cascade of antiviral responses including the induction of pro-inflammatory cytokines. The protein is TIR domain-containing adapter molecule 1 (TICAM1) of Homo sapiens (Human).